The following is a 350-amino-acid chain: Thioredoxin-like fold domain-containing protein MRL7L, chloroplastic (350 aa).

The N-terminal 48 residues, 1–48 (MILPFSTQFTCPVQDNGFSPSSLLSHCKRDRFEVTSLRYDSFGSVKTA), are a transit peptide targeting the chloroplast. Disordered stretches follow at residues 78–107 (KKEE…LDDP) and 182–201 (NEKK…DSEK). Composition is skewed to acidic residues over residues 82-93 (DSDSEDEEDEVK) and 186-200 (EEED…DDSE).

The protein resides in the plastid. It is found in the chloroplast stroma. The protein localises to the nucleus. Functionally, plays an essential role in early steps of chloroplast development. Involved in the regulation of plastid gene expression. Required for the proper function of the plastid transcriptional machinery and protein accumulation in thylakoid membranes. May function as molecular chaperone to ensure proper organization of the nucleoids in chloroplasts. Is a necessary component of phytochrome signaling for photosynthesis-associated plastid-encoded genes (PhAPGs) activation. Mediates the degradation of two repressors of chloroplast biogenesis, PIF1 and PIF3 in nucleus. Promotes the assembly of the plastid-encoded RNA polymerase (PEP) complex for PhAPG transcription in plastids. The protein is Thioredoxin-like fold domain-containing protein MRL7L, chloroplastic of Arabidopsis thaliana (Mouse-ear cress).